Consider the following 280-residue polypeptide: NLP effector protein Pc553546 (280 aa).

The first 19 residues, 1-19, serve as a signal peptide directing secretion; it reads MNLVAALVLCFALLSSVRG. A Hepta-peptide GHRHDWE motif motif is present at residues 123-129; that stretch reads AGRHDWA. 2 N-linked (GlcNAc...) asparagine glycosylation sites follow: Asn142 and Asn209.

This sequence belongs to the Necrosis inducing protein (NPP1) family.

Its subcellular location is the secreted. In terms of biological role, secreted effector that contributes strongly to virulence during infection by P.capsici. The chain is NLP effector protein Pc553546 from Phytophthora capsici.